Here is an 884-residue protein sequence, read N- to C-terminus: Valine--tRNA ligase (884 aa).

The 'HIGH' region signature appears at 47-57 (PNVTGALHIGH). The short motif at 525–529 (KMSKS) is the 'KMSKS' region element. Lys528 contacts ATP. Residues 812 to 884 (AVDFEAELAR…QQRFRDAIGK (73 aa)) adopt a coiled-coil conformation.

This sequence belongs to the class-I aminoacyl-tRNA synthetase family. ValS type 1 subfamily. Monomer.

The protein localises to the cytoplasm. The enzyme catalyses tRNA(Val) + L-valine + ATP = L-valyl-tRNA(Val) + AMP + diphosphate. Catalyzes the attachment of valine to tRNA(Val). As ValRS can inadvertently accommodate and process structurally similar amino acids such as threonine, to avoid such errors, it has a 'posttransfer' editing activity that hydrolyzes mischarged Thr-tRNA(Val) in a tRNA-dependent manner. This Nitratidesulfovibrio vulgaris (strain ATCC 29579 / DSM 644 / CCUG 34227 / NCIMB 8303 / VKM B-1760 / Hildenborough) (Desulfovibrio vulgaris) protein is Valine--tRNA ligase.